The sequence spans 514 residues: Peptide chain release factor 3 (514 aa).

Residues 8–268 (KKRRTFAIIS…TFLEFAPEPH (261 aa)) enclose the tr-type G domain. GTP contacts are provided by residues 17 to 24 (SHPDAGKT), 85 to 89 (DTPGH), and 139 to 142 (NKLD).

The protein belongs to the TRAFAC class translation factor GTPase superfamily. Classic translation factor GTPase family. PrfC subfamily.

It is found in the cytoplasm. Its function is as follows. Increases the formation of ribosomal termination complexes and stimulates activities of RF-1 and RF-2. It binds guanine nucleotides and has strong preference for UGA stop codons. It may interact directly with the ribosome. The stimulation of RF-1 and RF-2 is significantly reduced by GTP and GDP, but not by GMP. The chain is Peptide chain release factor 3 from Streptococcus uberis (strain ATCC BAA-854 / 0140J).